Here is a 194-residue protein sequence, read N- to C-terminus: Large ribosomal subunit protein bL9 (194 aa).

A disordered region spans residues P165 to G194. Acidic residues predominate over residues E166–G194.

It belongs to the bacterial ribosomal protein bL9 family.

Its function is as follows. Binds to the 23S rRNA. The chain is Large ribosomal subunit protein bL9 from Rhodospirillum rubrum (strain ATCC 11170 / ATH 1.1.1 / DSM 467 / LMG 4362 / NCIMB 8255 / S1).